Consider the following 646-residue polypeptide: Amyloid beta A4 precursor protein-binding family B member 1-interacting protein (646 aa).

A disordered region spans residues 82 to 141; that stretch reads FATERDTSKGSVPVAPAPSKPQSNFSLPASFDSSKPATSSNSIAAPPPPPAFKPSKEEEE. The span at 101–116 shows a compositional bias: polar residues; sequence KPQSNFSLPASFDSSK. The Ras-associating domain occupies 162 to 248; sequence KKLVVKVEIT…NKVLFQEKKH (87 aa). Residues 292–401 enclose the PH domain; sequence VPDLEGVLYL…WVTGIRVAKY (110 aa). The interval 420 to 646 is disordered; that stretch reads ASWANRTIQA…NAMQKKRTQP (227 aa). The span at 429–445 shows a compositional bias: low complexity; sequence ASSTASTPSPTPKAKAA. Pro residues-rich tracts occupy residues 465-500, 509-536, 560-577, and 584-598; these read LPPPPPSMDFLPPPPPDPMFPPPPPAPPAPPAPPVP, FPPPPKFPQSSFPPPPMDDLPPPPPPPE, LPPPPPDPVASLPPPPPA, and APPPPPPPPPPPAPA.

The protein belongs to the MRL family.

Its subcellular location is the cell membrane. It is found in the cytoplasm. The protein resides in the cytoskeleton. Appears to function in the signal transduction from Ras activation to actin cytoskeletal remodeling. This Danio rerio (Zebrafish) protein is Amyloid beta A4 precursor protein-binding family B member 1-interacting protein (apbb1ip).